Reading from the N-terminus, the 256-residue chain is Peroxisomal membrane protein PMP30A (256 aa).

The protein belongs to the peroxin-11 family.

The protein localises to the peroxisome membrane. In terms of biological role, involved in peroxisomal proliferation. Could participate in peroxisomal elongation or fission. May be involved in parceling of peroxisomes into regular quanta. In Candida boidinii (Yeast), this protein is Peroxisomal membrane protein PMP30A (PEX11A).